We begin with the raw amino-acid sequence, 220 residues long: Orotidine 5'-phosphate decarboxylase (220 aa).

Substrate contacts are provided by residues Asp-12, Lys-34, Asp-60–Thr-69, Ser-117, Pro-170–Ser-180, Gly-193, and Arg-194. The active-site Proton donor is the Lys-62.

The protein belongs to the OMP decarboxylase family. Type 1 subfamily. Homodimer.

It carries out the reaction orotidine 5'-phosphate + H(+) = UMP + CO2. Its pathway is pyrimidine metabolism; UMP biosynthesis via de novo pathway; UMP from orotate: step 2/2. Catalyzes the decarboxylation of orotidine 5'-monophosphate (OMP) to uridine 5'-monophosphate (UMP). This Methanosarcina mazei (strain ATCC BAA-159 / DSM 3647 / Goe1 / Go1 / JCM 11833 / OCM 88) (Methanosarcina frisia) protein is Orotidine 5'-phosphate decarboxylase.